A 103-amino-acid chain; its full sequence is Small ribosomal subunit protein uS10 (103 aa).

Belongs to the universal ribosomal protein uS10 family. Part of the 30S ribosomal subunit.

Its function is as follows. Involved in the binding of tRNA to the ribosomes. The protein is Small ribosomal subunit protein uS10 of Marinomonas sp. (strain MWYL1).